The following is a 194-amino-acid chain: Oligoribonuclease (194 aa).

The Exonuclease domain occupies 11–174 (LIWIDLEMTG…SDVRDSIDEL (164 aa)). Residue tyrosine 132 is part of the active site.

Belongs to the oligoribonuclease family.

It is found in the cytoplasm. In terms of biological role, 3'-to-5' exoribonuclease specific for small oligoribonucleotides. The chain is Oligoribonuclease from Xanthomonas axonopodis pv. citri (strain 306).